The chain runs to 735 residues: Delta-1-pyrroline-5-carboxylate synthase 2 (735 aa).

The interval 1–315 (MGRGGIGGAG…WGCSKEATAR (315 aa)) is glutamate 5-kinase. Substrate contacts are provided by Ser-79, Asp-176, and Asn-195. ATP is bound by residues 215–216 (SD), 221–226 (YSGPPS), and 255–261 (RGGMQAK). Positions 316 to 735 (EMAVAARDCS…VYTHRELPLQ (420 aa)) are gamma-glutamyl phosphate reductase.

The protein in the N-terminal section; belongs to the glutamate 5-kinase family. This sequence in the C-terminal section; belongs to the gamma-glutamyl phosphate reductase family.

The enzyme catalyses L-glutamate + ATP = L-glutamyl 5-phosphate + ADP. The catalysed reaction is L-glutamate 5-semialdehyde + phosphate + NADP(+) = L-glutamyl 5-phosphate + NADPH + H(+). It participates in amino-acid biosynthesis; L-proline biosynthesis; L-glutamate 5-semialdehyde from L-glutamate: step 1/2. It functions in the pathway amino-acid biosynthesis; L-proline biosynthesis; L-glutamate 5-semialdehyde from L-glutamate: step 2/2. Feedback regulated by proline. Functionally, P5CS plays a key role in proline biosynthesis, leading to osmoregulation in plants. Involved in abiotic stress tolerance. The polypeptide is Delta-1-pyrroline-5-carboxylate synthase 2 (Oryza sativa subsp. japonica (Rice)).